The primary structure comprises 353 residues: Putative glycosyltransferase TagX (353 aa).

It belongs to the glycosyltransferase 2 family.

The chain is Putative glycosyltransferase TagX (tagX) from Staphylococcus aureus (strain COL).